The chain runs to 318 residues: Methionyl-tRNA formyltransferase (318 aa).

112-115 (SILP) lines the (6S)-5,6,7,8-tetrahydrofolate pocket.

The protein belongs to the Fmt family.

The enzyme catalyses L-methionyl-tRNA(fMet) + (6R)-10-formyltetrahydrofolate = N-formyl-L-methionyl-tRNA(fMet) + (6S)-5,6,7,8-tetrahydrofolate + H(+). Functionally, attaches a formyl group to the free amino group of methionyl-tRNA(fMet). The formyl group appears to play a dual role in the initiator identity of N-formylmethionyl-tRNA by promoting its recognition by IF2 and preventing the misappropriation of this tRNA by the elongation apparatus. This chain is Methionyl-tRNA formyltransferase, found in Shewanella baltica (strain OS155 / ATCC BAA-1091).